The primary structure comprises 223 residues: Deoxyribose-phosphate aldolase (223 aa).

Catalysis depends on Asp89, which acts as the Proton donor/acceptor. Lys152 serves as the catalytic Schiff-base intermediate with acetaldehyde. Catalysis depends on Lys181, which acts as the Proton donor/acceptor.

This sequence belongs to the DeoC/FbaB aldolase family. DeoC type 1 subfamily.

Its subcellular location is the cytoplasm. The catalysed reaction is 2-deoxy-D-ribose 5-phosphate = D-glyceraldehyde 3-phosphate + acetaldehyde. The protein operates within carbohydrate degradation; 2-deoxy-D-ribose 1-phosphate degradation; D-glyceraldehyde 3-phosphate and acetaldehyde from 2-deoxy-alpha-D-ribose 1-phosphate: step 2/2. In terms of biological role, catalyzes a reversible aldol reaction between acetaldehyde and D-glyceraldehyde 3-phosphate to generate 2-deoxy-D-ribose 5-phosphate. This is Deoxyribose-phosphate aldolase from Listeria monocytogenes serotype 4a (strain HCC23).